The chain runs to 478 residues: Ribosome biogenesis protein NOP53 (478 aa).

The span at 1–10 shows a compositional bias: gly residues; the sequence is MAAGGSGVGG. The interval 1 to 51 is disordered; that stretch reads MAAGGSGVGGKRSSKSDADSGFLGLRPTSVDPALRRRRRGPRNKKRGWRRL. Position 2 is an N-acetylalanine (alanine 2). Serine 29 is subject to Phosphoserine. Basic residues predominate over residues 35 to 49; the sequence is RRRRRGPRNKKRGWR. Phosphoserine is present on residues serine 93 and serine 305. The tract at residues 148 to 431 is mediates interaction with CDKN2A/isoform tumor suppressor ARF; that stretch reads KEQLWEKLAK…SELTDSLRTL (284 aa). Residues 181–478 are mediates interaction with NF2; it reads KPGPQDTVER…EKRAFREIQL (298 aa). Residues 303 to 344 form a disordered region; sequence EESDGEGEPGQGEGPEAGDAEVCPTPARLATTEKKTEQQRRR. A compositionally biased stretch (basic and acidic residues) spans 333–342; sequence TTEKKTEQQR. The tract at residues 342 to 386 is mediates interaction with human herpesvirus 8 protein ORF16; that stretch reads RRREKAVHRLRVQQAALRAARLRHQELFRLRGIKAQVALRLAELA. Nucleolar localization signal regions lie at residues 347-395 and 396-478; these read AVHR…RQAR and REAE…EIQL.

This sequence belongs to the NOP53 family. In terms of assembly, homooligomer. Interacts with PTEN; regulates PTEN phosphorylation and increases its stability. Interacts with RPL11; retains RPL11 into the nucleolus. Interacts with CDKN2A/isoform tumor suppressor ARF; the interaction is direct and promotes ARF nucleoplasmic relocalization and ubiquitin-mediated proteasomal degradation. Interacts with NPM1; the interaction is direct and competitive with MYC. Interacts with NF2 (via FERM domain); the interaction is direct. Interacts with p53/TP53 (via the oligomerization region); the interaction is direct and may prevent the MDM2-mediated proteasomal degradation of p53/TP53. Interacts with RIGI; may regulate RIGI through USP15-mediated 'Lys-63'-linked deubiquitination. Interacts with UBTF. As to quaternary structure, (Microbial infection) Interacts with herpes simplex virus 1 early proteins ICP22 and ICP0. (Microbial infection) Interacts with Human herpesvirus 8 protein ORF16; may sequester ORF16 in host nucleolus and reduce its antiapoptotic activity. Post-translationally, ubiquitin-mediated proteasomal degradation is regulated by c-JUN. It is associated with relocalization to the nucleoplasm and decreased homooligomerization. Phosphorylated upon DNA damage probably by ATM and DNA-PK; may regulate NOP53 degradation. Expressed at high levels in heart and pancreas, moderate levels in placenta, liver, skeletal muscle, and kidney, and low levels in brain and lung.

The protein localises to the nucleus. It localises to the nucleolus. Its subcellular location is the nucleoplasm. Functionally, nucleolar protein which is involved in the integration of the 5S RNP into the ribosomal large subunit during ribosome biogenesis. In ribosome biogenesis, may also play a role in rRNA transcription. Also functions as a nucleolar sensor that regulates the activation of p53/TP53 in response to ribosome biogenesis perturbation, DNA damage and other stress conditions. DNA damage or perturbation of ribosome biogenesis disrupt the interaction between NOP53 and RPL11 allowing RPL11 transport to the nucleoplasm where it can inhibit MDM2 and allow p53/TP53 activation. It may also positively regulate the function of p53/TP53 in cell cycle arrest and apoptosis through direct interaction, preventing its MDM2-dependent ubiquitin-mediated proteasomal degradation. Originally identified as a tumor suppressor, it may also play a role in cell proliferation and apoptosis by positively regulating the stability of PTEN, thereby antagonizing the PI3K-AKT/PKB signaling pathway. May also inhibit cell proliferation and increase apoptosis through its interaction with NF2. May negatively regulate NPM1 by regulating its nucleoplasmic localization, oligomerization and ubiquitin-mediated proteasomal degradation. Thereby, may prevent NPM1 interaction with MYC and negatively regulate transcription mediated by the MYC-NPM1 complex. May also regulate cellular aerobic respiration. In the cellular response to viral infection, may play a role in the attenuation of interferon-beta through the inhibition of RIGI. The sequence is that of Ribosome biogenesis protein NOP53 from Homo sapiens (Human).